The sequence spans 581 residues: Arginine--tRNA ligase (581 aa).

Residues 126 to 136 (PNLAKEMHVGH) carry the 'HIGH' region motif.

The protein belongs to the class-I aminoacyl-tRNA synthetase family. In terms of assembly, monomer.

It localises to the cytoplasm. The catalysed reaction is tRNA(Arg) + L-arginine + ATP = L-arginyl-tRNA(Arg) + AMP + diphosphate. This is Arginine--tRNA ligase from Shewanella denitrificans (strain OS217 / ATCC BAA-1090 / DSM 15013).